A 276-amino-acid chain; its full sequence is Undecaprenyl-diphosphatase 1 (276 aa).

The next 5 membrane-spanning stretches (helical) occupy residues 85 to 105 (MNVV…EKTI), 108 to 128 (VLFA…VILW), 187 to 207 (VATE…TLYE), 217 to 237 (VDSI…AFAC), and 253 to 273 (FAWY…SGWI).

The protein belongs to the UppP family.

It localises to the cell inner membrane. It carries out the reaction di-trans,octa-cis-undecaprenyl diphosphate + H2O = di-trans,octa-cis-undecaprenyl phosphate + phosphate + H(+). Functionally, catalyzes the dephosphorylation of undecaprenyl diphosphate (UPP). Confers resistance to bacitracin. This Burkholderia thailandensis (strain ATCC 700388 / DSM 13276 / CCUG 48851 / CIP 106301 / E264) protein is Undecaprenyl-diphosphatase 1.